We begin with the raw amino-acid sequence, 2171 residues long: Mediator of DNA damage checkpoint protein 1 (2171 aa).

Over residues 1-19 (MEDTQAIDWDVEEEEETEQ) the composition is skewed to acidic residues. Residues 1-22 (MEDTQAIDWDVEEEEETEQSSE) form a disordered region. An interaction with CHEK2 region spans residues 1-150 (MEDTQAIDWD…SRGPLTVEET (150 aa)). The segment at 2 to 220 (EDTQAIDWDV…PFAFNLNSDT (219 aa)) is interaction with the MRN complex. The residue at position 4 (threonine 4) is a Phosphothreonine. The FHA domain occupies 54–105 (NVVGRMPDCSVALPFPSISKQHAEIEILAWDKAPILRDCGSLNGTQILRPPK). Position 108 is a phosphoserine (serine 108). Residues 145–568 (LTVEETPRVQ…PAKLLVVSLE (424 aa)) form a required for nuclear localization (NLS1) region. The residue at position 146 (threonine 146) is a Phosphothreonine. Residues serine 168, serine 176, serine 196, and serine 218 each carry the phosphoserine modification. Disordered regions lie at residues 185–248 (RTTS…AKQS) and 261–317 (DQPL…AEVH). Threonine 220 carries the phosphothreonine modification. Over residues 261 to 278 (DQPLVKERDDDTKVKRGA) the composition is skewed to basic and acidic residues. At serine 299 the chain carries Phosphoserine. At threonine 301 the chain carries Phosphothreonine. The span at 306-317 (DSRPPGRPAEVH) shows a compositional bias: basic and acidic residues. Serine 329 bears the Phosphoserine mark. At threonine 331 the chain carries Phosphothreonine. The segment at 355–387 (GVGTRGPGAPGLAHLQESQAGSDTDVEEGKAPQ) is disordered. 2 positions are modified to phosphoserine: serine 372 and serine 376. Threonine 378 is modified (phosphothreonine). Serine 394, serine 397, and serine 402 each carry phosphoserine. Threonine 404 carries the phosphothreonine modification. At serine 411 the chain carries Phosphoserine. Disordered regions lie at residues 443–469 (QRSQ…NREA) and 481–522 (VRAH…VDIN). Position 449 is a phosphothreonine (threonine 449). Serine 453 bears the Phosphoserine mark. Threonine 455 is subject to Phosphothreonine. 6 positions are modified to phosphoserine: serine 485, serine 495, serine 498, serine 504, serine 505, and serine 513. Residues 513–522 (SQASTTVDIN) show a composition bias toward polar residues. Threonine 523 carries the phosphothreonine modification. Position 590 is a phosphoserine (serine 590). Lysine 616 participates in a covalent cross-link: Glycyl lysine isopeptide (Lys-Gly) (interchain with G-Cter in SUMO1); alternate. Residue lysine 616 forms a Glycyl lysine isopeptide (Lys-Gly) (interchain with G-Cter in SUMO2); alternate linkage. Disordered stretches follow at residues 653 to 689 (DTLG…DNYG) and 780 to 1969 (SPPR…TKLN). The segment covering 671–685 (GREREQHVGGTKDSE) has biased composition (basic and acidic residues). A phosphoserine mark is found at serine 780 and serine 793. Lysine 812 bears the N6-acetyllysine mark. Basic and acidic residues-rich tracts occupy residues 819–844 (ETAE…ERQT), 851–862 (ELTKGKQDREQK), 868–905 (DTQR…EKQV), and 914–951 (AFER…RGEP). A phosphoserine mark is found at serine 955 and serine 998. A compositionally biased stretch (polar residues) spans 955-964 (SQDQKGQASS). Basic and acidic residues predominate over residues 1016-1031 (KASRIRAAEKVSRGDQ). A Phosphoserine modification is found at serine 1033. A compositionally biased stretch (pro residues) spans 1040-1051 (PTVPEAPAPPQK). Phosphoserine is present on residues serine 1068 and serine 1086. Over residues 1103–1113 (PKPKIRTRKSS) the composition is skewed to basic residues. Composition is skewed to polar residues over residues 1129–1157 (PSTS…SVKT) and 1170–1187 (PCTS…SQVT). Positions 1148–1692 (SRTNRSSVKT…TNRSSVKTPE (545 aa)) are interaction with the PRKDC complex. Threonine 1157 carries the post-translational modification Phosphothreonine. Threonine 1198 carries the phosphothreonine modification. Positions 1210–1227 (QPSTSTDRPVTSEPTSHA) are enriched in polar residues. Serine 1235 carries the post-translational modification Phosphoserine. Threonine 1239 is subject to Phosphothreonine. A compositionally biased stretch (polar residues) spans 1251–1268 (QPSTSTDQPVTSEPTYQA). Threonine 1280 and threonine 1302 each carry phosphothreonine. Positions 1306 to 1318 (TSRTTRSRTNMSS) are enriched in low complexity. Polar residues-rich tracts occupy residues 1334–1350 (PSTS…TSRA) and 1375–1403 (PSTS…SVKT). The segment covering 1429–1441 (TSRTTRSRTNMSS) has biased composition (low complexity). Polar residues predominate over residues 1457-1473 (PSTSTEQPVTPEPTSRA). Residues serine 1481 and serine 1482 each carry the phosphoserine modification. Lysine 1484 is modified (N6-acetyllysine). A Phosphothreonine modification is found at threonine 1485. Lysine 1495 is covalently cross-linked (Glycyl lysine isopeptide (Lys-Gly) (interchain with G-Cter in SUMO1); alternate). A Glycyl lysine isopeptide (Lys-Gly) (interchain with G-Cter in SUMO2); alternate cross-link involves residue lysine 1495. Composition is skewed to polar residues over residues 1498-1526 (PSTS…SVKT), 1538-1557 (QPST…QVTR), and 1580-1596 (ASAS…TSRT). Phosphothreonine is present on residues threonine 1507 and threonine 1548. Threonine 1615 and threonine 1630 each carry phosphothreonine. Composition is skewed to polar residues over residues 1620 to 1649 (QPST…SVKT) and 1661 to 1678 (QPST…TSRA). Serine 1646 carries the post-translational modification Phosphoserine. Phosphothreonine occurs at positions 1649 and 1671. Phosphoserine is present on serine 1686. Threonine 1690 carries the phosphothreonine modification. Over residues 1693-1702 (PVVPTAPEPH) the composition is skewed to pro residues. The span at 1706–1718 (STDQPVTPKLTSR) shows a compositional bias: polar residues. Threonine 1712, threonine 1746, and threonine 1753 each carry phosphothreonine. Over residues 1760-1771 (GGQSKTLRSSTV) the composition is skewed to polar residues. Serine 1763 is modified (phosphoserine). The residue at position 1779 (threonine 1779) is a Phosphothreonine. A compositionally biased stretch (polar residues) spans 1780-1801 (PEFQSPVTTDQPISPEPITQPS). The required for nuclear localization (NLS2) stretch occupies residues 1780–2171 (PEFQSPVTTD…VLSPLEMSST (392 aa)). 2 positions are modified to phosphoserine: serine 1784 and serine 1793. A Glycyl lysine isopeptide (Lys-Gly) (interchain with G-Cter in SUMO2) cross-link involves residue lysine 1822. Residue serine 1857 is modified to Phosphoserine. Residue lysine 1872 forms a Glycyl lysine isopeptide (Lys-Gly) (interchain with G-Cter in SUMO2) linkage. Threonine 1882 carries the post-translational modification Phosphothreonine. Serine 1902 carries the phosphoserine modification. Polar residues predominate over residues 1905 to 1918 (HQKQPQRGEVSQKT). Residue lysine 1922 forms a Glycyl lysine isopeptide (Lys-Gly) (interchain with G-Cter in SUMO1); alternate linkage. Lysine 1922 is covalently cross-linked (Glycyl lysine isopeptide (Lys-Gly) (interchain with G-Cter in SUMO2); alternate). Basic and acidic residues predominate over residues 1929-1939 (AEKPGKEEDVV). Phosphothreonine is present on threonine 1940. BRCT domains lie at 1974–2052 (APKV…EYVV) and 2073–2164 (RERR…FVLS). Arginine 2025 is subject to Omega-N-methylarginine.

Homodimer. Interacts with H2AX, which requires phosphorylation of H2AX on 'Ser-139'. Interacts with the MRN complex, composed of MRE11, RAD50, and NBN. Interacts with CHEK2, which requires ATM-mediated phosphorylation of 'Thr-68' within the FHA domain of CHEK2. Interacts constitutively with the BRCA1-BARD1 complex, SMC1A and TP53BP1. Interacts with ATM and FANCD2, and these interactions are reduced upon DNA damage. Also interacts with the PRKDC complex, composed of XRCC6/KU70, XRCC5/KU80 and PRKDC/XRCC7. This interaction may be required for PRKDC autophosphorylation, which is essential for DNA double strand break (DSB) repair. When phosphorylated by ATM, interacts with RNF8 (via FHA domain). Interacts with CEP164. When phosphorylated, interacts with APTX (via FHA-like domain). Interacts (when phosphorylated) with TOPBP1; promoting TOPBP1 localization to DNA damage sites during mitosis. Interacts (when phosphorylated) with NBN; promoting NBN and MRN complex localization to DNA damage sites. In terms of processing, phosphorylated upon exposure to ionizing radiation (IR), ultraviolet radiation (UV), and hydroxyurea (HU). Phosphorylation in response to IR requires ATM, NBN, and possibly CHEK2. Also phosphorylated during the G2/M phase of the cell cycle and during activation of the mitotic spindle checkpoint. Phosphorylation at Thr-4 by ATM stabilizes and enhances homodimerization via the FHA domain. Phosphorylated at Ser-168 and Ser-196 by CK2 in response to DNA damage during mitosis, promoting interaction with TOPBP1. Phosphorylated by CK2 in response to DNA damage, promoting interaction with NBN and recruitment of the MRN complex to DNA damage sites. Post-translationally, sumoylation at Lys-1922 by PIAS4 following DNA damage promotes ubiquitin-mediated degradation. Ubiquitinated by RNF4, leading to proteasomal degradation; undergoes 'Lys-48'-linked polyubiquitination.

Its subcellular location is the nucleus. The protein localises to the chromosome. Its function is as follows. Histone reader protein required for checkpoint-mediated cell cycle arrest in response to DNA damage within both the S phase and G2/M phases of the cell cycle. Specifically recognizes and binds histone H2AX phosphorylated at 'Ser-139', a marker of DNA damage, serving as a scaffold for the recruitment of DNA repair and signal transduction proteins to discrete foci of DNA damage sites. Also required for downstream events subsequent to the recruitment of these proteins. These include phosphorylation and activation of the ATM, CHEK1 and CHEK2 kinases, and stabilization of TP53/p53 and apoptosis. ATM and CHEK2 may also be activated independently by a parallel pathway mediated by TP53BP1. Required for chromosomal stability during mitosis by promoting recruitment of TOPBP1 to DNA double strand breaks (DSBs): TOPBP1 forms filamentous assemblies that bridge MDC1 and tether broken chromosomes during mitosis. Required for the repair of DSBs via homologous recombination by promoting recruitment of NBN component of the MRN complex to DSBs. The protein is Mediator of DNA damage checkpoint protein 1 (MDC1) of Pan troglodytes (Chimpanzee).